A 299-amino-acid polypeptide reads, in one-letter code: Putative adenosine/adenine deaminase (299 aa).

Residues His-16 and His-18 each contribute to the Zn(2+) site. Residues His-18 and Gly-157 each coordinate substrate. Position 184 (His-184) interacts with Zn(2+). Glu-187 acts as the Proton donor in catalysis. Position 265 (Asp-265) interacts with Zn(2+). Asp-266 provides a ligand contact to substrate.

Belongs to the metallo-dependent hydrolases superfamily. Adenosine and AMP deaminases family. It depends on Zn(2+) as a cofactor.

Putative nucleoside deaminase. May catalyze the hydrolytic deamination of adenosine or some similar substrate and play a role in purine metabolism. The sequence is that of Putative adenosine/adenine deaminase from Treponema pallidum (strain Nichols).